A 191-amino-acid chain; its full sequence is Peptidyl-tRNA hydrolase (191 aa).

Residue Tyr14 participates in tRNA binding. His19 acts as the Proton acceptor in catalysis. Positions 64, 66, and 112 each coordinate tRNA.

Belongs to the PTH family. Monomer.

It is found in the cytoplasm. The catalysed reaction is an N-acyl-L-alpha-aminoacyl-tRNA + H2O = an N-acyl-L-amino acid + a tRNA + H(+). Functionally, hydrolyzes ribosome-free peptidyl-tRNAs (with 1 or more amino acids incorporated), which drop off the ribosome during protein synthesis, or as a result of ribosome stalling. In terms of biological role, catalyzes the release of premature peptidyl moieties from peptidyl-tRNA molecules trapped in stalled 50S ribosomal subunits, and thus maintains levels of free tRNAs and 50S ribosomes. The chain is Peptidyl-tRNA hydrolase from Lachnoclostridium phytofermentans (strain ATCC 700394 / DSM 18823 / ISDg) (Clostridium phytofermentans).